The chain runs to 309 residues: Ferrochelatase (309 aa).

His-185 and Glu-264 together coordinate Fe cation.

Belongs to the ferrochelatase family.

It localises to the cytoplasm. It catalyses the reaction heme b + 2 H(+) = protoporphyrin IX + Fe(2+). It participates in porphyrin-containing compound metabolism; protoheme biosynthesis; protoheme from protoporphyrin-IX: step 1/1. Catalyzes the ferrous insertion into protoporphyrin IX. This Aquifex aeolicus (strain VF5) protein is Ferrochelatase.